The chain runs to 142 residues: Secreted acidic protein 1B (142 aa).

2 stretches are compositionally biased toward acidic residues: residues 1-47 and 54-64; these read SDDE…DDNE and TNDDVDYGDGN. Residues 1 to 74 are disordered; it reads SDDESGDDEN…DEAREIGDHS (74 aa). At 1-123 the chain is on the extracellular side; the sequence is SDDESGDDEN…YLRSGGSHFK (123 aa). Residues 65 to 74 are compositionally biased toward basic and acidic residues; that stretch reads DEAREIGDHS. The helical transmembrane segment at 124–141 threads the bilayer; the sequence is GQLLNITLGLGFCILFLL. Leu-142 is a topological domain (cytoplasmic).

Component of the acid-insoluble and acid-soluble organic matrix of the aragonitic skeleton (at protein level).

It localises to the membrane. This Acropora millepora (Staghorn coral) protein is Secreted acidic protein 1B.